A 944-amino-acid polypeptide reads, in one-letter code: Protein translocase subunit SecA (944 aa).

ATP contacts are provided by residues Gln-87, 105 to 109 (GEGKT), and Asp-494. Residues 894 to 944 (HAAAAGDGEEKPRPKQETVVRTQPKVGRNDPCPCGSGKKYKKCHGATEAAV) form a disordered region. The span at 901 to 911 (GEEKPRPKQET) shows a compositional bias: basic and acidic residues. Zn(2+)-binding residues include Cys-925, Cys-927, Cys-936, and His-937.

This sequence belongs to the SecA family. Monomer and homodimer. Part of the essential Sec protein translocation apparatus which comprises SecA, SecYEG and auxiliary proteins SecDF-YajC and YidC. The cofactor is Zn(2+).

The protein resides in the cell inner membrane. The protein localises to the cytoplasm. It carries out the reaction ATP + H2O + cellular proteinSide 1 = ADP + phosphate + cellular proteinSide 2.. Functionally, part of the Sec protein translocase complex. Interacts with the SecYEG preprotein conducting channel. Has a central role in coupling the hydrolysis of ATP to the transfer of proteins into and across the cell membrane, serving as an ATP-driven molecular motor driving the stepwise translocation of polypeptide chains across the membrane. In Anaeromyxobacter sp. (strain Fw109-5), this protein is Protein translocase subunit SecA.